A 300-amino-acid polypeptide reads, in one-letter code: Sodium/potassium/calcium exchanger 1 (300 aa).

The disordered stretch occupies residues 1 to 251 (DPGSQGVGAE…ENEQPLSLEW (251 aa)). 5 stretches are compositionally biased toward acidic residues: residues 92 to 102 (GEVEGDEDEGE), 109 to 119 (GEVEGDEDEGE), 126 to 136 (GEVEGDEDEGE), 158 to 175 (GEVE…DEGE), and 215 to 244 (GDSE…EENE). A helical transmembrane segment spans residues 259-275 (AIYLFLLPIVFPLWLTV).

The protein belongs to the Ca(2+):cation antiporter (CaCA) (TC 2.A.19) family. SLC24A subfamily. Post-translationally, the uncleaved signal sequence is required for efficient membrane targeting and proper membrane integration and topology.

Its subcellular location is the cell membrane. It carries out the reaction Ca(2+)(out) + K(+)(out) + 4 Na(+)(in) = Ca(2+)(in) + K(+)(in) + 4 Na(+)(out). Functionally, calcium, potassium:sodium antiporter that transports 1 Ca(2+) and 1 K(+) in exchange for 4 Na(+). Critical component of the visual transduction cascade, controlling the calcium concentration of outer segments during light and darkness. Light causes a rapid lowering of cytosolic free calcium in the outer segment of both retinal rod and cone photoreceptors and the light-induced lowering of calcium is caused by extrusion via this protein which plays a key role in the process of light adaptation. This chain is Sodium/potassium/calcium exchanger 1 (SLC24A1), found in Bison bison (American bison).